Reading from the N-terminus, the 584-residue chain is Isopropyl malate synthase htyA (584 aa).

Residues 39–317 form the Pyruvate carboxyltransferase domain; sequence PIWLSTDLRD…ETGLDFSNLP (279 aa).

The protein belongs to the alpha-IPM synthase/homocitrate synthase family. LeuA type 2 subfamily.

The enzyme catalyses 3-methyl-2-oxobutanoate + acetyl-CoA + H2O = (2S)-2-isopropylmalate + CoA + H(+). The protein operates within antifungal biosynthesis. In terms of biological role, isopropyl malate synthase; part of the gene cluster that mediates the de novo generation of L-homotyrosine from acetyl-CoA and 4-hydroxyphenyl-pyruvate. L-homotyrosine is a building block of echinocandin B, a fungal lipidated cyclic hexapeptide that acts as an antifungal agent. L-homotyrosine 4-hydroxyphenyl-pyruvate first undergoes an aldol-type condensation by htyA with the C-2 of acetyl-CoA followed by the release of CoA to form 2-(4-hydroxybenzyl)-malate. This is followed by isomerization of 2-(4-hydroxy-benzyl)-malate to 3-(4-hydroxybenzyl)-malate by htyD. Thereafter, 3-(4-hydroxybenzyl)-malate undergoes decarboxylation and oxidation to form 2-oxo-4-(4-hydroxybenzyl)butanoic acid, coupled to reduction of NAD(+) to NADH by htyC. The product then undergoes transamination catalyzed by htyB to form L-homotyrosine. This chain is Isopropyl malate synthase htyA, found in Aspergillus rugulosus (Emericella rugulosa).